Consider the following 360-residue polypeptide: Phenylalanine--tRNA ligase alpha subunit (360 aa).

Glutamate 264 serves as a coordination point for Mg(2+).

Belongs to the class-II aminoacyl-tRNA synthetase family. Phe-tRNA synthetase alpha subunit type 1 subfamily. Tetramer of two alpha and two beta subunits. It depends on Mg(2+) as a cofactor.

The protein resides in the cytoplasm. It catalyses the reaction tRNA(Phe) + L-phenylalanine + ATP = L-phenylalanyl-tRNA(Phe) + AMP + diphosphate + H(+). The protein is Phenylalanine--tRNA ligase alpha subunit of Streptomyces avermitilis (strain ATCC 31267 / DSM 46492 / JCM 5070 / NBRC 14893 / NCIMB 12804 / NRRL 8165 / MA-4680).